Here is a 225-residue protein sequence, read N- to C-terminus: Probable septum site-determining protein MinC (225 aa).

The protein belongs to the MinC family. As to quaternary structure, interacts with MinD and FtsZ.

Functionally, cell division inhibitor that blocks the formation of polar Z ring septums. Rapidly oscillates between the poles of the cell to destabilize FtsZ filaments that have formed before they mature into polar Z rings. Prevents FtsZ polymerization. The polypeptide is Probable septum site-determining protein MinC (Listeria welshimeri serovar 6b (strain ATCC 35897 / DSM 20650 / CCUG 15529 / CIP 8149 / NCTC 11857 / SLCC 5334 / V8)).